Consider the following 202-residue polypeptide: Small ribosomal subunit protein uS4c (202 aa).

The S4 RNA-binding domain maps to 90-153 (MRLDNVIFRL…KSETIISKNI (64 aa)).

Belongs to the universal ribosomal protein uS4 family. In terms of assembly, part of the 30S ribosomal subunit. Contacts protein S5. The interaction surface between S4 and S5 is involved in control of translational fidelity.

It localises to the plastid. The protein localises to the chloroplast. One of the primary rRNA binding proteins, it binds directly to 16S rRNA where it nucleates assembly of the body of the 30S subunit. Its function is as follows. With S5 and S12 plays an important role in translational accuracy. The polypeptide is Small ribosomal subunit protein uS4c (rps4) (Sphaerocarpos donnelli (Liverwort)).